The following is a 272-amino-acid chain: sn-1 stearoyl-lipid 9-desaturase (272 aa).

2 helical membrane-spanning segments follow: residues 11-31 (INWV…FAFI) and 39-59 (AVGV…TLGF). The Histidine box-1 motif lies at 60–65 (HRLVTH). The short motif at 97–101 (HRIHH) is the Histidine box-2 element. A helical membrane pass occupies residues 160-180 (IALGLLLLYLGGWSFVVWGVF). A Histidine box-3 motif is present at residues 230-234 (HHAFQ).

The protein belongs to the fatty acid desaturase type 2 family. It depends on Fe(2+) as a cofactor.

It localises to the membrane. The catalysed reaction is a 1-octadecanoyl 2-acyl-glycerolipid + 2 reduced [2Fe-2S]-[ferredoxin] + O2 + 2 H(+) = a 1-[(9Z)-octadecenoyl]-2-acyl-glycerolipid + 2 oxidized [2Fe-2S]-[ferredoxin] + 2 H2O. The protein operates within lipid metabolism; polyunsaturated fatty acid biosynthesis. Its function is as follows. Desaturase involved in fatty acid biosynthesis. Introduces a double bond at carbon 9 of stearoyl groups (18:0) attached to the sn-1 position of the glycerol moiety of membrane glycerolipids. Does not desaturate palmitic acid (16:0), palmitoleic acid (16:1) and cis-vaccenic acid (18:1). The chain is sn-1 stearoyl-lipid 9-desaturase from Anabaena variabilis.